We begin with the raw amino-acid sequence, 501 residues long: Actin nucleation-promoting factor WASL (501 aa).

Ser-2 is subject to N-acetylserine. Residues 31-138 enclose the WH1 domain; that stretch reads LGKKCVTMSS…KAVTDLLGRR (108 aa). Residues 135 to 158 are disordered; it reads LGRRQRKSEKRRDAPNGPNLPMAT. The CRIB domain occupies 200–213; the sequence is IGTPSNFQHIGHVG. At Ser-239 the chain carries Phosphoserine; by TNK2. At Tyr-253 the chain carries Phosphotyrosine; by FAK1 and TNK2. 2 disordered regions span residues 263–403 and 442–501; these read EAVK…GNKA and QLKS…EWED. Residues 273–387 show a composition bias toward pro residues; the sequence is APPPPPPSRG…PPGPPPPPGL (115 aa). Arg-304 is subject to Omega-N-methylarginine. WH2 domains follow at residues 401–418 and 429–446; these read NKAA…LKKV and GRDA…LKSV. The span at 442–453 shows a compositional bias: polar residues; it reads QLKSVSDGQEST. 2 positions are modified to phosphoserine: Ser-480 and Ser-481. Positions 482-501 are enriched in acidic residues; the sequence is DEDEDDDDEEDFEDDDEWED.

Binds actin and the Arp2/3 complex. Interacts with CDC42. Interacts with FCHSD1. Interacts with FCHSD2. Binds to SH3 domains of GRB2. Interacts with the C-terminal SH3 domain of DNMBP. Interacts with SNX9. Interacts with the WW domains of PRPF40A/FBP11. Interacts with PTK2/FAK1. Interacts with PACSIN1, PACSIN2 and PACSIN3. Interacts with NOSTRIN. Binds to TNK2. Interacts with SNX33. Interacts with NONO (via second RRM domain); the interaction is direct. Component of a multiprotein complex with NONO and SFPQ; associates with the complex via direct interaction with NONO. Phosphorylation at Ser-239, Tyr-253, Ser-480 and Ser-481 enhances actin polymerization activity.

It localises to the cytoplasm. The protein localises to the cytoskeleton. The protein resides in the nucleus. Regulates actin polymerization by stimulating the actin-nucleating activity of the Arp2/3 complex. Involved in various processes, such as mitosis and cytokinesis, via its role in the regulation of actin polymerization. Together with CDC42, involved in the extension and maintenance of the formation of thin, actin-rich surface projections called filopodia. In addition to its role in the cytoplasm, also plays a role in the nucleus by regulating gene transcription, probably by promoting nuclear actin polymerization. Binds to HSF1/HSTF1 and forms a complex on heat shock promoter elements (HSE) that negatively regulates HSP90 expression. Plays a role in dendrite spine morphogenesis. The sequence is that of Actin nucleation-promoting factor WASL (Wasl) from Mus musculus (Mouse).